The chain runs to 404 residues: Trigger factor (404 aa).

The region spanning 160–225 (KDHLFVRTEE…VLEVKTLKLP (66 aa)) is the PPIase FKBP-type domain.

Belongs to the FKBP-type PPIase family. Tig subfamily.

It is found in the cytoplasm. The catalysed reaction is [protein]-peptidylproline (omega=180) = [protein]-peptidylproline (omega=0). Its function is as follows. Involved in protein export. Acts as a chaperone by maintaining the newly synthesized protein in an open conformation. Functions as a peptidyl-prolyl cis-trans isomerase. The polypeptide is Trigger factor (Thermus thermophilus (strain ATCC BAA-163 / DSM 7039 / HB27)).